The chain runs to 204 residues: Elongation factor Ts (204 aa).

The segment at 87–90 is involved in Mg(2+) ion dislocation from EF-Tu; the sequence is TDFV.

Belongs to the EF-Ts family.

It is found in the cytoplasm. Its function is as follows. Associates with the EF-Tu.GDP complex and induces the exchange of GDP to GTP. It remains bound to the aminoacyl-tRNA.EF-Tu.GTP complex up to the GTP hydrolysis stage on the ribosome. This chain is Elongation factor Ts, found in Frankia casuarinae (strain DSM 45818 / CECT 9043 / HFP020203 / CcI3).